Here is a 335-residue protein sequence, read N- to C-terminus: ATP-dependent 6-phosphofructokinase (335 aa).

Gly-11 contributes to the ATP binding site. Arg-21–Arg-25 serves as a coordination point for ADP. Residues Arg-72–Tyr-73 and Gly-102–Ser-105 each bind ATP. Asp-103 is a binding site for Mg(2+). Thr-125–Asp-127 contributes to the substrate binding site. Catalysis depends on Asp-127, which acts as the Proton acceptor. Arg-154 is a binding site for ADP. Residues Arg-162 and Met-169–Arg-171 contribute to the substrate site. ADP is bound by residues Gly-185–Asp-187 and Lys-213–His-215. Substrate-binding positions include Glu-222, Arg-244, and His-250 to Arg-253.

It belongs to the phosphofructokinase type A (PFKA) family. ATP-dependent PFK group I subfamily. Prokaryotic clade 'B1' sub-subfamily. Homotetramer. Mg(2+) serves as cofactor.

It localises to the cytoplasm. It carries out the reaction beta-D-fructose 6-phosphate + ATP = beta-D-fructose 1,6-bisphosphate + ADP + H(+). It participates in carbohydrate degradation; glycolysis; D-glyceraldehyde 3-phosphate and glycerone phosphate from D-glucose: step 3/4. With respect to regulation, allosterically activated by ADP and other diphosphonucleosides, and allosterically inhibited by phosphoenolpyruvate. Functionally, catalyzes the phosphorylation of D-fructose 6-phosphate to fructose 1,6-bisphosphate by ATP, the first committing step of glycolysis. The sequence is that of ATP-dependent 6-phosphofructokinase from Streptococcus pneumoniae serotype 4 (strain ATCC BAA-334 / TIGR4).